A 507-amino-acid polypeptide reads, in one-letter code: AMP phosphorylase (507 aa).

AMP contacts are provided by residues Gly168, 194-199 (SRAITG), and Thr203. The active-site Proton donor is the Asp256. AMP-binding residues include Ser264 and Lys288.

Belongs to the thymidine/pyrimidine-nucleoside phosphorylase family. Type 2 subfamily.

The catalysed reaction is AMP + phosphate = alpha-D-ribose 1,5-bisphosphate + adenine. The enzyme catalyses CMP + phosphate = cytosine + alpha-D-ribose 1,5-bisphosphate. It carries out the reaction UMP + phosphate = alpha-D-ribose 1,5-bisphosphate + uracil. Catalyzes the conversion of AMP and phosphate to adenine and ribose 1,5-bisphosphate (R15P). Exhibits phosphorylase activity toward CMP and UMP in addition to AMP. Functions in an archaeal AMP degradation pathway, together with R15P isomerase and RubisCO. This is AMP phosphorylase from Methanosarcina mazei (strain ATCC BAA-159 / DSM 3647 / Goe1 / Go1 / JCM 11833 / OCM 88) (Methanosarcina frisia).